An 890-amino-acid polypeptide reads, in one-letter code: Pentatricopeptide repeat-containing protein At3g57430, chloroplastic (890 aa).

Residues 1-44 constitute a chloroplast transit peptide; the sequence is MSCPLAFTFSLPSIFPFPSQLLPFSRHKHPYLLRATPTSATEDV. 18 PPR repeats span residues 61 to 95, 96 to 130, 132 to 162, 163 to 197, 198 to 231, 235 to 265, 266 to 300, 301 to 335, 337 to 371, 372 to 398, 404 to 438, 439 to 473, 474 to 504, 516 to 550, 551 to 581, 582 to 616, 617 to 652, and 653 to 683; these read SPEW…GIKP, DNYA…GYGV, SVTV…ISER, NQVS…NVEP, SSFT…GLRK, NSFI…FGGR, DLVT…GVEP, DEFT…GSLD, NSFV…KIGL, WNAM…MEES, NSTT…GLDR, DRFV…DLVT, WNTM…ERKV, NSIT…NLAT, DVAV…IPQK, NVIT…GVKP, NEVT…GVEP, and SSDH…MPRD. The segment at 689-764 is type E motif; the sequence is AWSSLLGASR…EPGCSWIEHG (76 aa). Residues 765–795 are type E(+) motif; that stretch reads DEVHKFVAGDSSHPQSEKLSGYLETLWERMR. Positions 796–890 are type DYW motif; that stretch reads KEGYVPDTSC…NGTCSCGDYW (95 aa).

Belongs to the PPR family. PCMP-H subfamily.

Its subcellular location is the plastid. The protein localises to the chloroplast. Functionally, involved in RNA editing events in chloroplasts. Required for the editing of a single site in ndhB and ndhF transcripts, which are two plastid-encoded subunits of the chloroplast NAD(P)H dehydrogenase (NDH) complex. Required for the editing of a single site in psbZ. Required for optimal activity of the NDH complex of the photosynthetic electron transport chain. This is Pentatricopeptide repeat-containing protein At3g57430, chloroplastic (PCMP-H81) from Arabidopsis thaliana (Mouse-ear cress).